A 201-amino-acid chain; its full sequence is MELVMKDAPGALTVSETTFGRDFNEALVHQVVVAYAAGARQGTRAQKTRAEVTGSGKKPWRQKGTGRARAGSVKSPIWRSGGVTFAAKPQDHSQKVNKKMYRGALKSILSELVRQDRLIIVEKFSVEAPKTKLLAQKLKDMALEDVLIVTGELDENLFLAARNLYKVDVRDVAGIDPVSLIAFDKVVMTADAVKQVEEMLA.

The segment at Ala45–Val73 is disordered.

This sequence belongs to the universal ribosomal protein uL4 family. In terms of assembly, part of the 50S ribosomal subunit.

Functionally, one of the primary rRNA binding proteins, this protein initially binds near the 5'-end of the 23S rRNA. It is important during the early stages of 50S assembly. It makes multiple contacts with different domains of the 23S rRNA in the assembled 50S subunit and ribosome. Its function is as follows. Forms part of the polypeptide exit tunnel. This Yersinia pseudotuberculosis serotype O:1b (strain IP 31758) protein is Large ribosomal subunit protein uL4.